Here is a 601-residue protein sequence, read N- to C-terminus: DNA mismatch repair protein MutL (601 aa).

It belongs to the DNA mismatch repair MutL/HexB family.

This protein is involved in the repair of mismatches in DNA. It is required for dam-dependent methyl-directed DNA mismatch repair. May act as a 'molecular matchmaker', a protein that promotes the formation of a stable complex between two or more DNA-binding proteins in an ATP-dependent manner without itself being part of a final effector complex. This chain is DNA mismatch repair protein MutL, found in Listeria monocytogenes serovar 1/2a (strain ATCC BAA-679 / EGD-e).